The primary structure comprises 382 residues: F-box protein At3g27290 (382 aa).

The F-box domain occupies arginine 16–serine 105.

This is F-box protein At3g27290 from Arabidopsis thaliana (Mouse-ear cress).